The following is a 282-amino-acid chain: Tetraspanin-6 (282 aa).

The Cytoplasmic segment spans residues 1–7 (MYRFSNT). Residues 8–28 (VIGVLNLLTLLASIPIIGTAL) form a helical membrane-spanning segment. Topologically, residues 29 to 44 (YKARSSTTCENFLQTP) are extracellular. The chain crosses the membrane as a helical span at residues 45–65 (LLVIGFIILIVSLAGFIGACF). The Cytoplasmic portion of the chain corresponds to 66 to 74 (NVAWALWVY). Residues 75-95 (LVVMIFLIATLMGLTLFGLVV) traverse the membrane as a helical segment. Topologically, residues 96-220 (TSQGGGVEVP…EIRLDWRKLS (125 aa)) are extracellular. Residues 221 to 241 (VVNILVLVLLIAVYAAGCCAF) traverse the membrane as a helical segment. The Cytoplasmic portion of the chain corresponds to 242 to 282 (HNTRHAAHPYHPSDDNRMTRVRPRWDYYWWRWWHEKKEQLY).

This sequence belongs to the tetraspanin (TM4SF) family.

Its subcellular location is the membrane. May be involved in the regulation of cell differentiation. This Arabidopsis thaliana (Mouse-ear cress) protein is Tetraspanin-6 (TET6).